A 313-amino-acid polypeptide reads, in one-letter code: Porphobilinogen deaminase (313 aa).

Cysteine 242 is subject to S-(dipyrrolylmethanemethyl)cysteine.

Belongs to the HMBS family. In terms of assembly, monomer. Dipyrromethane is required as a cofactor.

It catalyses the reaction 4 porphobilinogen + H2O = hydroxymethylbilane + 4 NH4(+). The protein operates within porphyrin-containing compound metabolism; protoporphyrin-IX biosynthesis; coproporphyrinogen-III from 5-aminolevulinate: step 2/4. Functionally, tetrapolymerization of the monopyrrole PBG into the hydroxymethylbilane pre-uroporphyrinogen in several discrete steps. The sequence is that of Porphobilinogen deaminase from Yersinia pestis bv. Antiqua (strain Angola).